The following is a 57-amino-acid chain: Enolase (57 aa).

The active-site Proton donor is the glutamate 25.

Belongs to the enolase family. Mg(2+) serves as cofactor.

The protein resides in the cytoplasm. Its subcellular location is the secreted. The protein localises to the cell surface. The enzyme catalyses (2R)-2-phosphoglycerate = phosphoenolpyruvate + H2O. It functions in the pathway carbohydrate degradation; glycolysis; pyruvate from D-glyceraldehyde 3-phosphate: step 4/5. Its function is as follows. Catalyzes the reversible conversion of 2-phosphoglycerate (2-PG) into phosphoenolpyruvate (PEP). It is essential for the degradation of carbohydrates via glycolysis. The protein is Enolase of Clostridioides difficile (Peptoclostridium difficile).